The chain runs to 378 residues: S-adenosylmethionine synthase (378 aa).

Residue His15 coordinates ATP. Asp17 is a binding site for Mg(2+). Glu43 contributes to the K(+) binding site. Residues Glu56 and Gln99 each coordinate L-methionine. A flexible loop region spans residues 99-109; that stretch reads QSPDINQGINR. Residues 164–166, 230–231, Asp239, 245–246, Ala262, and Lys266 contribute to the ATP site; these read DAK, RF, and RK. Asp239 is a binding site for L-methionine. Lys270 provides a ligand contact to L-methionine.

It belongs to the AdoMet synthase family. Homotetramer; dimer of dimers. Mg(2+) is required as a cofactor. The cofactor is K(+).

The protein localises to the cytoplasm. It catalyses the reaction L-methionine + ATP + H2O = S-adenosyl-L-methionine + phosphate + diphosphate. The protein operates within amino-acid biosynthesis; S-adenosyl-L-methionine biosynthesis; S-adenosyl-L-methionine from L-methionine: step 1/1. Catalyzes the formation of S-adenosylmethionine (AdoMet) from methionine and ATP. The overall synthetic reaction is composed of two sequential steps, AdoMet formation and the subsequent tripolyphosphate hydrolysis which occurs prior to release of AdoMet from the enzyme. This chain is S-adenosylmethionine synthase, found in Buchnera aphidicola subsp. Acyrthosiphon pisum (strain 5A).